The following is a 309-amino-acid chain: Coenzyme PQQ synthesis protein B (309 aa).

This sequence belongs to the PqqB family.

Its pathway is cofactor biosynthesis; pyrroloquinoline quinone biosynthesis. Functionally, may be involved in the transport of PQQ or its precursor to the periplasm. This chain is Coenzyme PQQ synthesis protein B, found in Nitrosococcus oceani (strain ATCC 19707 / BCRC 17464 / JCM 30415 / NCIMB 11848 / C-107).